The sequence spans 575 residues: MKFSQLYAPTLKEAPADAEVISHALLYRAGFIRKIAAGVYSYLPLAKRTLSKIEAIVRKEMNEIGAQEVSMPVIQPAELWKTTGRWDDYGPEMMKLKDRHERDFTLGPTHEEVFTHMVKDELRSYKQLPLFLYQIGPKYRDEIRPRFGLLRAREFIMKDGYSFHDSDQSLNETYEACKNAYRKITEKIGLKYIIIEAASGAIGGNESHEFVSFAPVGETNLLKCEKCGYSSNDEQAPYRGKYHRDEEIEKPVELIHTPNVRSVEQVAEFLNVSKNKIVKSLLFIGRNGFVMALIQGDRELNIEKLKVHVNDQSLRLAEPDEVLQAFRVPIGFIGPVGIEKVHVVADCGIKYMKNVVVGGMKKDYHYINANVGRDFSPDSYTDLRVVQPNDPCPVCGEQLTGSKGIEIAQIFKLGTKYSKAMNALYMDDKGEVKPFIMGCYGWGISRTMAAIVEQLHDEDGILWPRSVAPFELIITVVSAQDQDQRIFAQKLYNSLLSSEIDVLLDDRDISPGMKFKDADLIGFPLRITVGKSLKEGMVELKSRNSSKSIKVSAELSKINSVLFKMLEEYNPHERV.

This sequence belongs to the class-II aminoacyl-tRNA synthetase family. ProS type 1 subfamily. Homodimer.

The protein resides in the cytoplasm. The enzyme catalyses tRNA(Pro) + L-proline + ATP = L-prolyl-tRNA(Pro) + AMP + diphosphate. Catalyzes the attachment of proline to tRNA(Pro) in a two-step reaction: proline is first activated by ATP to form Pro-AMP and then transferred to the acceptor end of tRNA(Pro). As ProRS can inadvertently accommodate and process non-cognate amino acids such as alanine and cysteine, to avoid such errors it has two additional distinct editing activities against alanine. One activity is designated as 'pretransfer' editing and involves the tRNA(Pro)-independent hydrolysis of activated Ala-AMP. The other activity is designated 'posttransfer' editing and involves deacylation of mischarged Ala-tRNA(Pro). The misacylated Cys-tRNA(Pro) is not edited by ProRS. This Pseudothermotoga lettingae (strain ATCC BAA-301 / DSM 14385 / NBRC 107922 / TMO) (Thermotoga lettingae) protein is Proline--tRNA ligase.